Here is a 592-residue protein sequence, read N- to C-terminus: Ferric-chelate reductase 1 (592 aa).

The helical transmembrane segment at 2-22 threads the bilayer; it reads AAPQITLSVLVIALLTCSVTA. Positions 13 to 179 constitute a Reelin domain; the sequence is IALLTCSVTA…FTTPKATTQP (167 aa). Asn85, Asn308, Asn321, and Asn353 each carry an N-linked (GlcNAc...) asparagine glycan. One can recognise a DOMON domain in the interval 216–331; that stretch reads EPACVFLSFT…ESYYIFFAEG (116 aa). The Cytochrome b561 domain occupies 335-534; that stretch reads DGRIFRHSQQ…IGTEVILEIH (200 aa). A helical membrane pass occupies residues 372-392; the sequence is AHGALMFVAWMTTVSIGVLVA. Heme b is bound by residues His373 and His414. A run of 5 helical transmembrane segments spans residues 415–435, 446–466, 477–499, 515–535, and 569–589; these read RMLM…PFVY, HPYL…LATF, VFNW…AMFL, YAMM…EIHA, and VVLA…LSAI. Heme b contacts are provided by His446 and His482.

This sequence belongs to the FRRS1 family. Heme b serves as cofactor. In terms of tissue distribution, expressed in spleen, liver and kidney with low expression in brain. Localizes in adult brain to the choroid plexus of the fourth, third, and lateral ventricles and to ependymal cells that line the ventricles.

It is found in the membrane. Functionally, ferric-chelate reductases reduce Fe(3+) to Fe(2+) before its transport from the endosome to the cytoplasm. In Mus musculus (Mouse), this protein is Ferric-chelate reductase 1 (FRRS1).